A 371-amino-acid polypeptide reads, in one-letter code: Ribosomal RNA small subunit methyltransferase H (371 aa).

S-adenosyl-L-methionine is bound by residues 92–94, Asp-111, Tyr-138, Asp-159, and Gln-166; that span reads GGH.

It belongs to the methyltransferase superfamily. RsmH family.

It is found in the cytoplasm. It catalyses the reaction cytidine(1402) in 16S rRNA + S-adenosyl-L-methionine = N(4)-methylcytidine(1402) in 16S rRNA + S-adenosyl-L-homocysteine + H(+). In terms of biological role, specifically methylates the N4 position of cytidine in position 1402 (C1402) of 16S rRNA. The sequence is that of Ribosomal RNA small subunit methyltransferase H from Mycolicibacterium gilvum (strain PYR-GCK) (Mycobacterium gilvum (strain PYR-GCK)).